The chain runs to 588 residues: MNKSRQKELTRWLKQQSVISQRWLNISRLLGFVSGILIIAQAWFMARILQHMIMENIPREALLLPFTLLVLTFVLRAWVVWLRERVGYHAGQHIRFAIRRQVLDRLQQAGPAWIQGKPAGSWATLVLEQIDDMHDYYARYLPQMALAVSVPLLIVVAIFPSNWAAALILLGTAPLIPLFMALVGMGAADANRRNFLALARLSGHFLDRLRGMETLRIFGRGEAEIESIRSASEDFRQRTMEVLRLAFLSSGILEFFTSLSIALVAVYFGFSYLGELDFGHYDTGVTLAAGFLALILAPEFFQPLRDLGTFYHAKAQAVGAADSLKTFMETPLAHPQRGEAELASTDPVTIEAEELFITSPEGKTLAGPLNFTLPAGQRAVLVGRSGSGKSSLLNALSGFLSYQGSLRINGIELRDLSPESWRKHLSWVGQNPQLPAATLRDNVLLARPDASEQELQAALDNAWVSEFLPLLPQGVDTPVGDQAARLSVGQAQRVAVARALLNPCSLLLLDEPAASLDAHSEQRVMEALNAASLRQTTLMVTHQLEDLADWDVIWVMQDGRIIEQGRYAELSVAGGPFATLLAHRQEEI.

The Cytoplasmic segment spans residues 1–15 (MNKSRQKELTRWLKQ). The next 2 helical transmembrane spans lie at 16 to 36 (QSVI…VSGI) and 37 to 57 (LIIA…MENI). The region spanning 20-306 (SQRWLNISRL…APEFFQPLRD (287 aa)) is the ABC transmembrane type-1 domain. Residues 58-136 (PREALLLPFT…LEQIDDMHDY (79 aa)) are Cytoplasmic-facing. Residues 137 to 157 (YARYLPQMALAVSVPLLIVVA) traverse the membrane as a helical segment. The Periplasmic portion of the chain corresponds to 158–161 (IFPS). A helical membrane pass occupies residues 162–182 (NWAAALILLGTAPLIPLFMAL). Residues 183-249 (VGMGAADANR…MEVLRLAFLS (67 aa)) are Cytoplasmic-facing. A helical transmembrane segment spans residues 250-270 (SGILEFFTSLSIALVAVYFGF). Residues 271-276 (SYLGEL) lie on the Periplasmic side of the membrane. The helical transmembrane segment at 277–297 (DFGHYDTGVTLAAGFLALILA) threads the bilayer. Topologically, residues 298–573 (PEFFQPLRDL…QGRYAELSVA (276 aa)) are cytoplasmic. The region spanning 339–572 (EAELASTDPV…EQGRYAELSV (234 aa)) is the ABC transporter domain. 373-380 (LPAGQRAV) is an ATP binding site.

This sequence belongs to the ABC transporter superfamily. Cysteine exporter (TC 3.A.1.129.1) family. Forms a heterodimer with CydC.

The protein localises to the cell inner membrane. It catalyses the reaction L-cysteine(in) + ATP + H2O = L-cysteine(out) + ADP + phosphate + H(+). The catalysed reaction is glutathione(in) + ATP + H2O = glutathione(out) + ADP + phosphate + H(+). ATPase activity is stimulated by various thiol compounds. The presence of heme leads to a further enhancement of thiol-stimulated ATPase activity, although a large excess of heme inhibits activity. Glutathione transport is inhibited by sodium orthovanadate, an inhibitor of ABC-type transport systems, but not by the proton ionophore carbonyl cyanide m-chlorophenylhydrazone (CCCP). Its function is as follows. Part of the ABC transporter complex CydDC that exports the reduced low-molecular-weight thiols cysteine and glutathione to the periplasm. Export of these thiol-containing redox-active molecules may be crucial for redox homeostasis in the periplasm, permitting correct assembly of various respiratory complexes and formation of correct disulfide bonds in periplasmic and secreted proteins. CydD contains transmembrane domains (TMD), which form a pore in the inner membrane, and an ATP-binding domain (NBD), which is responsible for energy generation. Required for the assembly of functional cytochrome bd-type quinol oxidases and periplasmic c-type cytochromes. Overexpression of CydDC under anaerobic conditions also results in the formation of a heme biosynthesis-derived pigment, P-574. CydDC binds heme b, but heme is probably not transported by the complex and instead has a role in regulating ATPase activity. Conversely, a more recent study suggests an alternative function of CydDC: authors suggest that CydDC does not mediate the export of L-cysteine but rather reduces cytoplasmic L-cystine to L-cysteine. The principle function of CydDC would be to maintain the reduced state of cytoplasmic L-cysteine, thereby providing an important connection between sulfur metabolism, oxidative stress and resistance to antibiotics. The polypeptide is Glutathione/L-cysteine transport system ATP-binding/permease protein CydD (Escherichia coli (strain K12)).